The chain runs to 357 residues: Probable dual-specificity RNA methyltransferase RlmN (357 aa).

The active-site Proton acceptor is the Glu92. In terms of domain architecture, Radical SAM core spans 98 to 336 (HKYGLSVCVT…CGVRLEHGTD (239 aa)). A disulfide bond links Cys105 and Cys341. [4Fe-4S] cluster-binding residues include Cys112, Cys116, and Cys119. Residues 164 to 165 (GE), Ser196, 219 to 221 (SLH), and Asn297 each bind S-adenosyl-L-methionine. Cys341 serves as the catalytic S-methylcysteine intermediate.

Belongs to the radical SAM superfamily. RlmN family. [4Fe-4S] cluster serves as cofactor.

Its subcellular location is the cytoplasm. It carries out the reaction adenosine(2503) in 23S rRNA + 2 reduced [2Fe-2S]-[ferredoxin] + 2 S-adenosyl-L-methionine = 2-methyladenosine(2503) in 23S rRNA + 5'-deoxyadenosine + L-methionine + 2 oxidized [2Fe-2S]-[ferredoxin] + S-adenosyl-L-homocysteine. It catalyses the reaction adenosine(37) in tRNA + 2 reduced [2Fe-2S]-[ferredoxin] + 2 S-adenosyl-L-methionine = 2-methyladenosine(37) in tRNA + 5'-deoxyadenosine + L-methionine + 2 oxidized [2Fe-2S]-[ferredoxin] + S-adenosyl-L-homocysteine. Specifically methylates position 2 of adenine 2503 in 23S rRNA and position 2 of adenine 37 in tRNAs. This chain is Probable dual-specificity RNA methyltransferase RlmN, found in Exiguobacterium sibiricum (strain DSM 17290 / CCUG 55495 / CIP 109462 / JCM 13490 / 255-15).